Reading from the N-terminus, the 966-residue chain is General transcriptional corepressor CYC8 (966 aa).

Residues 1 to 37 (MNPGGEQTIMEQPAQQQQQQQQQQQQQQQQAAVPQQP) are disordered. A compositionally biased stretch (low complexity) spans 12 to 36 (QPAQQQQQQQQQQQQQQQQAAVPQQ). 10 TPR repeats span residues 46-79 (AETW…NPSS), 80-113 (AKAL…NPEL), 114-147 (SDVW…LSNP), 150-183 (PKLW…DPHF), 187-220 (NEIY…PPAP), 224-257 (WDIW…NQHH), 262-295 (QQLG…DPSD), 296-329 (ATTW…DSRN), 330-363 (PIFW…NPYI), and 364-398 (SEVW…DVNN). 2 stretches are compositionally biased toward polar residues: residues 412–429 (LENP…TNAS) and 439–489 (PTLQ…NGAS). 3 disordered regions span residues 412-489 (LENP…NGAS), 631-666 (TQAM…QAQA), and 699-723 (SSST…TQAP). At S429 the chain carries Phosphoserine. The prion domain (PrD) stretch occupies residues 467 to 682 (QQQHPAQQTP…HNVEQNVLPQ (216 aa)). T475 carries the post-translational modification Phosphothreonine. A compositionally biased stretch (low complexity) spans 637–666 (PQSSQLPPQQQQLQSVQHPQQLQGQPQAQA). A compositionally biased stretch (polar residues) spans 699 to 713 (SSSTHTENNTKSPRQ). 3 positions are modified to phosphoserine: S710, S741, and S768. Residues 759 to 780 (NAKSEVSNQSPAVVESNTNNTS) are compositionally biased toward polar residues. Positions 759–966 (NAKSEVSNQS…QVEEDENYDD (208 aa)) are disordered. Over residues 797-808 (AQEPPQEASPAE) the composition is skewed to low complexity. The segment covering 814-823 (ASVSPSTKPL) has biased composition (polar residues). 2 positions are modified to phosphoserine: S815 and S817. Residues 826-843 (EPESSSVQPTVSSESSTT) show a composition bias toward low complexity. Residues 844-860 (KANDQSTAETIELSTAT) are compositionally biased toward polar residues. S866 is modified (phosphoserine). Positions 870–880 (DEVRQHSKEEN) are enriched in basic and acidic residues. Over residues 882-896 (TTEASAPSTEEAEPA) the composition is skewed to low complexity. Basic and acidic residues-rich tracts occupy residues 897-906 (ASRDAEKQQD) and 924-936 (ETVK…REEE). The span at 940-950 (QEKSPQENTLP) shows a compositional bias: polar residues. S943 carries the phosphoserine modification.

The protein belongs to the CYC8/SSN6 family. In terms of assembly, associates with TUP1 to form the CYC8-TUP1 (or TUP1-SSN6) corepressor complex that is composed of 4 copies of TUP1 and one copy of CYC8. Interacts with MATALPHA2, CTI6, MIG1, TUP1, SUT1, RFX1, PGD1, HOS1, HOS2 and RPD3.

The protein resides in the nucleus. Functionally, acts as a component of the CYC8-TUP1 corepressor complex which is involved in the repression of many genes in a wide variety of physiological processes including heme-regulated and catabolite repressed genes. May also be involved in the derepression of at least some target genes. The complex is recruited to target genes by interaction with DNA-bound transcriptional repressors, like MATALPHA2, MIG1, RFX1 and SKO1. The complex recruits histone deacetylases to produce a repressive chromatin structure, interacts with hypoacetylated N-terminal tails of histones H3 and H4 that have been programmed for repression by the action of histone deacetylases and interferes directly with the transcriptional machinery by associating with the RNA polymerase II mediator complex. The protein is General transcriptional corepressor CYC8 (CYC8) of Saccharomyces cerevisiae (strain ATCC 204508 / S288c) (Baker's yeast).